The sequence spans 142 residues: Group IIE secretory phospholipase A2 (142 aa).

Residues 1–19 form the signal peptide; sequence MKSPHVLVFLCLLVALVTG. Ca(2+) contacts are provided by D41, G43, Y45, G47, and G49. 7 disulfide bridges follow: C44–C135, C46–C62, C61–C115, C67–C142, C68–C108, C77–C101, and C95–C106. H65 is a catalytic residue. D66 lines the Ca(2+) pocket. D109 is a catalytic residue. Ca(2+) is bound by residues Y130 and N132.

It belongs to the phospholipase A2 family. It depends on Ca(2+) as a cofactor. In terms of tissue distribution, restricted to the brain, heart, lung, and placenta.

The protein localises to the secreted. Its subcellular location is the cytoplasm. It carries out the reaction a 1,2-diacyl-sn-glycero-3-phosphoethanolamine + H2O = a 1-acyl-sn-glycero-3-phosphoethanolamine + a fatty acid + H(+). The catalysed reaction is 1-hexadecanoyl-2-(9Z-octadecenoyl)-sn-glycero-3-phosphoethanolamine + H2O = 1-hexadecanoyl-sn-glycero-3-phosphoethanolamine + (9Z)-octadecenoate + H(+). The enzyme catalyses 1-hexadecanoyl-2-(9Z,12Z-octadecadienoyl)-sn-glycero-3-phosphoethanolamine + H2O = 1-hexadecanoyl-sn-glycero-3-phosphoethanolamine + (9Z,12Z)-octadecadienoate + H(+). It catalyses the reaction 1-hexadecanoyl-2-(5Z,8Z,11Z,14Z-eicosatetraenoyl)-sn-glycero-3-phosphoethanolamine + H2O = 1-hexadecanoyl-sn-glycero-3-phosphoethanolamine + (5Z,8Z,11Z,14Z)-eicosatetraenoate + H(+). It carries out the reaction 1,2-dihexadecanoyl-sn-glycero-3-phospho-(1'-sn-glycerol) + H2O = 1-hexadecanoyl-sn-glycero-3-phospho-(1'-sn-glycerol) + hexadecanoate + H(+). The catalysed reaction is 1-hexadecanoyl-2-(9Z-octadecenoyl)-sn-glycero-3-phosphoglycerol + H2O = 1-hexadecanoyl-sn-glycero-3-phosphoglycerol + (9Z)-octadecenoate + H(+). The enzyme catalyses a 1,2-diacyl-sn-glycero-3-phosphocholine + H2O = a 1-acyl-sn-glycero-3-phosphocholine + a fatty acid + H(+). It catalyses the reaction 1,2-dihexadecanoyl-sn-glycero-3-phosphocholine + H2O = 1-hexadecanoyl-sn-glycero-3-phosphocholine + hexadecanoate + H(+). It carries out the reaction 1-hexadecanoyl-2-(9Z-octadecenoyl)-sn-glycero-3-phosphocholine + H2O = 1-hexadecanoyl-sn-glycero-3-phosphocholine + (9Z)-octadecenoate + H(+). The catalysed reaction is 1-hexadecanoyl-2-(9Z,12Z-octadecadienoyl)-sn-glycero-3-phosphocholine + H2O = (9Z,12Z)-octadecadienoate + 1-hexadecanoyl-sn-glycero-3-phosphocholine + H(+). The enzyme catalyses 1-hexadecanoyl-2-(4Z,7Z,10Z,13Z,16Z,19Z-docosahexaenoyl)-sn-glycero-3-phosphocholine + H2O = (4Z,7Z,10Z,13Z,16Z,19Z)-docosahexaenoate + 1-hexadecanoyl-sn-glycero-3-phosphocholine + H(+). Secretory calcium-dependent phospholipase A2 that primarily targets extracellular phospholipids. Hydrolyzes the ester bond of the fatty acyl group attached at sn-2 position of phospholipids (phospholipase A2 activity), releasing various unsaturated fatty acids including oleoate, linoleoate, arachidonate, docosahexaenoate and lysophosphatidylethanolamines in preference to lysophosphatidylcholines. In response to high-fat diet, hydrolyzes minor lipoprotein phospholipids including phosphatidylserines, phosphatidylinositols and phosphatidylglycerols, altering lipoprotein composition and fat storage in adipose tissue and liver. May act in an autocrine and paracrine manner. Contributes to lipid remodeling of cellular membranes and generation of lipid mediators involved in pathogen clearance. Cleaves sn-2 fatty acyl chains of phosphatidylglycerols and phosphatidylethanolamines, which are major components of membrane phospholipids in bacteria. Acts as a hair follicle phospholipase A2. Selectively releases lysophosphatidylethanolamines (LPE) and various unsaturated fatty acids in skin to regulate hair follicle homeostasis. May regulate the inflammatory response by releasing arachidonate, a precursor of prostaglandins and leukotrienes. Upon allergen exposure, may participate in allergic inflammatory response by enhancing leukotriene C4 synthesis and degranulation in mast cells. The protein is Group IIE secretory phospholipase A2 (PLA2G2E) of Homo sapiens (Human).